A 492-amino-acid polypeptide reads, in one-letter code: Ketol-acid reductoisomerase (NADP(+)) (492 aa).

Residues 15–208 form the KARI N-terminal Rossmann domain; that stretch reads AQLGKCRFMA…GGHRAGVLES (194 aa). NADP(+) contacts are provided by residues 45-48, R68, R76, S78, and 108-110; these read CGAQ and DKQ. Residue H132 is part of the active site. Residue G158 coordinates NADP(+). KARI C-terminal knotted domains are found at residues 209-344 and 345-485; these read SFVA…NAPQ and FEGK…MTDM. Residues D217, E221, E389, and E393 each contribute to the Mg(2+) site. S414 contributes to the substrate binding site.

This sequence belongs to the ketol-acid reductoisomerase family. It depends on Mg(2+) as a cofactor.

It carries out the reaction (2R)-2,3-dihydroxy-3-methylbutanoate + NADP(+) = (2S)-2-acetolactate + NADPH + H(+). The enzyme catalyses (2R,3R)-2,3-dihydroxy-3-methylpentanoate + NADP(+) = (S)-2-ethyl-2-hydroxy-3-oxobutanoate + NADPH + H(+). Its pathway is amino-acid biosynthesis; L-isoleucine biosynthesis; L-isoleucine from 2-oxobutanoate: step 2/4. It participates in amino-acid biosynthesis; L-valine biosynthesis; L-valine from pyruvate: step 2/4. In terms of biological role, involved in the biosynthesis of branched-chain amino acids (BCAA). Catalyzes an alkyl-migration followed by a ketol-acid reduction of (S)-2-acetolactate (S2AL) to yield (R)-2,3-dihydroxy-isovalerate. In the isomerase reaction, S2AL is rearranged via a Mg-dependent methyl migration to produce 3-hydroxy-3-methyl-2-ketobutyrate (HMKB). In the reductase reaction, this 2-ketoacid undergoes a metal-dependent reduction by NADPH to yield (R)-2,3-dihydroxy-isovalerate. The protein is Ketol-acid reductoisomerase (NADP(+)) of Yersinia enterocolitica serotype O:8 / biotype 1B (strain NCTC 13174 / 8081).